The chain runs to 149 residues: UPF0178 protein NT01CX_0440 (149 aa).

It belongs to the UPF0178 family.

The sequence is that of UPF0178 protein NT01CX_0440 from Clostridium novyi (strain NT).